Consider the following 216-residue polypeptide: Octanoyltransferase (216 aa).

A BPL/LPL catalytic domain is found at 32 to 207 (SDSQDELWIV…TFSQIMGYQQ (176 aa)). Residues 71–78 (RGGQVTYH), 138–140 (SLG), and 151–153 (GLA) contribute to the substrate site. Cys169 acts as the Acyl-thioester intermediate in catalysis.

Belongs to the LipB family.

The protein localises to the cytoplasm. The catalysed reaction is octanoyl-[ACP] + L-lysyl-[protein] = N(6)-octanoyl-L-lysyl-[protein] + holo-[ACP] + H(+). Its pathway is protein modification; protein lipoylation via endogenous pathway; protein N(6)-(lipoyl)lysine from octanoyl-[acyl-carrier-protein]: step 1/2. Its function is as follows. Catalyzes the transfer of endogenously produced octanoic acid from octanoyl-acyl-carrier-protein onto the lipoyl domains of lipoate-dependent enzymes. Lipoyl-ACP can also act as a substrate although octanoyl-ACP is likely to be the physiological substrate. This is Octanoyltransferase from Shewanella frigidimarina (strain NCIMB 400).